Consider the following 433-residue polypeptide: Tol-Pal system protein TolB (433 aa).

Positions 1 to 26 (MSLMTKLGFRALVASCLIAAGGAAHA) are cleaved as a signal peptide.

It belongs to the TolB family. As to quaternary structure, the Tol-Pal system is composed of five core proteins: the inner membrane proteins TolA, TolQ and TolR, the periplasmic protein TolB and the outer membrane protein Pal. They form a network linking the inner and outer membranes and the peptidoglycan layer.

The protein localises to the periplasm. Its function is as follows. Part of the Tol-Pal system, which plays a role in outer membrane invagination during cell division and is important for maintaining outer membrane integrity. The protein is Tol-Pal system protein TolB of Burkholderia thailandensis (strain ATCC 700388 / DSM 13276 / CCUG 48851 / CIP 106301 / E264).